A 169-amino-acid chain; its full sequence is Short form salivary protein D7R3 (169 aa).

The signal sequence occupies residues 1-21 (MFGKLLPCAILVWCLFSLGQA). 3 disulfides stabilise this stretch: cysteine 30-cysteine 62, cysteine 43-cysteine 168, and cysteine 101-cysteine 120. Noradrenaline contacts are provided by glutamate 31 and arginine 46. Glutamate 31 serves as a coordination point for serotonin. Serotonin is bound by residues histidine 59, tyrosine 118, aspartate 135, and glutamate 138. The histamine site is built by tyrosine 118, aspartate 135, and glutamate 138. Noradrenaline is bound by residues aspartate 135 and glutamate 138.

It belongs to the PBP/GOBP family. As to expression, female saliva (at protein level). Female salivary gland. Low-level expression in female carcass without salivary glands. Not detected in male tissues.

It localises to the secreted. Its function is as follows. Modulates blood feeding of female mosquitoes on vertebrate species by binding and sequestering different mediators involved in the host response. Binds serotonin, noradrenaline, histamine and adrenaline. Inhibits histamine-, serotonin- and noradrenaline-induced smooth muscle contraction. Exhibits vasodilating activity. The protein is Short form salivary protein D7R3 of Anopheles gambiae (African malaria mosquito).